A 492-amino-acid polypeptide reads, in one-letter code: Trichothecene C-15 hydroxylase (492 aa).

The chain crosses the membrane as a helical span at residues 6–26 (LWPLLALSGGTGLAYLVVVVV). Residues 88 to 106 (AMKDVRGHRKSGEPEHGKD) show a composition bias toward basic and acidic residues. Residues 88–116 (AMKDVRGHRKSGEPEHGKDPISVQSNGDN) form a disordered region. N-linked (GlcNAc...) asparagine glycosylation is found at N124, N198, and N290. Residue C438 participates in heme binding.

It belongs to the cytochrome P450 family. Heme serves as cofactor.

Its subcellular location is the membrane. It participates in sesquiterpene biosynthesis; trichothecene biosynthesis. Trichothecene C-15 hydroxylase; part of the core gene cluster that mediates the biosynthesis of trichothecenes, a very large family of chemically related bicyclic sesquiterpene compounds acting as mycotoxins, including T2-toxin. The biosynthesis of trichothecenes begins with the cyclization of farnesyl diphosphate to trichodiene and is catalyzed by the trichodiene synthase TRI5. Trichodiene undergoes a series of oxygenations catalyzed by the cytochrome P450 monooxygenase TRI4. TRI4 controls the addition of four oxygens at C-2, C-3, C-11, and the C-12, C-13-epoxide to form the intermediate isotrichotriol. Isotrichotriol then undergoes a non-enzymatic isomerization and cyclization to form isotrichodermol. During this process, the oxygen at the C-2 position becomes the pyran ring oxygen and the hydroxyl group at C-11 is lost. More complex type A trichothecenes are built by modifying isotrichodermol through a series of paired hydroxylation and acetylation or acylation steps. Isotrichodermol is converted to isotrichodermin by the acetyltransferase TRI101. TRI101 encodes a C-3 transacetylase that acts as a self-protection or resistance factor during biosynthesis and that the presence of a free C-3 hydroxyl group is a key component of Fusarium trichothecene phytotoxicity. A second hydroxyl group is added to C-15 by the trichothecene C-15 hydroxylase TRI11, producing 15-decalonectrin, which is then acetylated by TRI3, producing calonectrin. A third hydroxyl group is added at C-4 by the cytochrome P450 monooxygenase TRI13, converting calonectrin to 3,15-diacetoxyspirpenol, which is subsequently acetylated by the acetyltransferase TRI7. A fourth hydroxyl group is added to C-8 by the cytochrome P450 monooxygenase TRI1, followed by the addition of an isovaleryl moiety by TRI16. Finally, the acetyl group is removed from the C-3 position by the trichothecene C-3 esterase TRI8 to produce T-2 toxin. This Fusarium sporotrichioides protein is Trichothecene C-15 hydroxylase.